Reading from the N-terminus, the 345-residue chain is Protein RecA (345 aa).

65–72 (GPESSGKT) is an ATP binding site. Over residues 326-336 (EKFQPAEAARE) the composition is skewed to basic and acidic residues. The disordered stretch occupies residues 326 to 345 (EKFQPAEAAREEGDDEGEDE).

Belongs to the RecA family.

It localises to the cytoplasm. In terms of biological role, can catalyze the hydrolysis of ATP in the presence of single-stranded DNA, the ATP-dependent uptake of single-stranded DNA by duplex DNA, and the ATP-dependent hybridization of homologous single-stranded DNAs. It interacts with LexA causing its activation and leading to its autocatalytic cleavage. This chain is Protein RecA, found in Stenotrophomonas maltophilia (strain K279a).